The following is a 452-amino-acid chain: Poly(A) polymerase I (452 aa).

Active-site residues include D68, D70, and D150. Residues E427–E452 are disordered. Residues L431 to E452 are compositionally biased toward basic residues.

Belongs to the tRNA nucleotidyltransferase/poly(A) polymerase family.

It carries out the reaction RNA(n) + ATP = RNA(n)-3'-adenine ribonucleotide + diphosphate. Adds poly(A) tail to the 3' end of many RNAs, which usually targets these RNAs for decay. Plays a significant role in the global control of gene expression, through influencing the rate of transcript degradation, and in the general RNA quality control. The polypeptide is Poly(A) polymerase I (Haemophilus influenzae (strain ATCC 51907 / DSM 11121 / KW20 / Rd)).